The following is a 247-amino-acid chain: Chymase (247 aa).

Residues 1-19 (MLLLPLPLLLFFLCSRAEA) form the signal peptide. A propeptide spans 20-21 (GE) (activation peptide). One can recognise a Peptidase S1 domain in the interval 22–245 (IIGGTECKPH…YRPWINKILQ (224 aa)). An intrachain disulfide couples Cys51 to Cys67. Catalysis depends on His66, which acts as the Charge relay system. N-linked (GlcNAc...) asparagine glycans are attached at residues Asn80 and Asn103. Residue Asp110 is the Charge relay system of the active site. 2 disulfide bridges follow: Cys144/Cys209 and Cys175/Cys188. Ser203 functions as the Charge relay system in the catalytic mechanism.

This sequence belongs to the peptidase S1 family. Granzyme subfamily.

It is found in the secreted. The protein localises to the cytoplasmic granule. The catalysed reaction is Preferential cleavage: Phe-|-Xaa &gt; Tyr-|-Xaa &gt; Trp-|-Xaa &gt; Leu-|-Xaa.. In terms of biological role, major secreted protease of mast cells with suspected roles in vasoactive peptide generation, extracellular matrix degradation, and regulation of gland secretion. This Macaca fascicularis (Crab-eating macaque) protein is Chymase (CMA1).